A 409-amino-acid polypeptide reads, in one-letter code: Putative competence-damage inducible protein (409 aa).

This sequence belongs to the CinA family.

In Clostridium botulinum (strain ATCC 19397 / Type A), this protein is Putative competence-damage inducible protein.